The sequence spans 62 residues: Photosystem II reaction center protein Z (62 aa).

2 helical membrane passes run 8–28 (LVSI…VILV) and 41–61 (YASA…NSFV).

It belongs to the PsbZ family. In terms of assembly, PSII is composed of 1 copy each of membrane proteins PsbA, PsbB, PsbC, PsbD, PsbE, PsbF, PsbH, PsbI, PsbJ, PsbK, PsbL, PsbM, PsbT, PsbX, PsbY, PsbZ, Psb30/Ycf12, at least 3 peripheral proteins of the oxygen-evolving complex and a large number of cofactors. It forms dimeric complexes.

Its subcellular location is the plastid. The protein localises to the chloroplast thylakoid membrane. In terms of biological role, may control the interaction of photosystem II (PSII) cores with the light-harvesting antenna, regulates electron flow through the 2 photosystem reaction centers. PSII is a light-driven water plastoquinone oxidoreductase, using light energy to abstract electrons from H(2)O, generating a proton gradient subsequently used for ATP formation. The sequence is that of Photosystem II reaction center protein Z from Guillardia theta (Cryptophyte).